A 378-amino-acid chain; its full sequence is MSTPHIVVGVSGGVDSSVAAWKLAQQGEPIAGLFMQNWADDGSGDCRAEDDRRDAVAVCGVLGMPFHFRDFSGEYWSGVFEHFLAEYAAGRTPNPDVLCNREVKFKHFLDAAQALGAERIATGHYAQVAHRGGRWRLLRGADRDKDQSYFLHQLGQSQLAATLFPIGDLEKSTLRRIARDAGLPTHAKKDSTGICFIGERDFREFLGRYLPARTGEIRDPQGQRIAEHPGVFYFTLGQREGLNIGGVRGRAAAPWYVVGKDVASNVLYVDQDRDSPLLQSRWLQSEQAHWVTGAPPARRFSCTAQTRYRQPDEPCTVDVQDDGSVQVHFERPQRAVTPGQSLVLYDGKECLGGAVIAATDAPLERQLAGSSFSSEVVA.

Residues 9 to 16 and M35 each bind ATP; that span reads GVSGGVDS. The interval 94 to 96 is interaction with target base in tRNA; it reads NPD. Residue C99 is the Nucleophile of the active site. An intrachain disulfide couples C99 to C195. G123 contributes to the ATP binding site. The interval 145–147 is interaction with tRNA; the sequence is KDQ. C195 acts as the Cysteine persulfide intermediate in catalysis. The interaction with tRNA stretch occupies residues 307 to 308; it reads RY.

The protein belongs to the MnmA/TRMU family.

It is found in the cytoplasm. It catalyses the reaction S-sulfanyl-L-cysteinyl-[protein] + uridine(34) in tRNA + AH2 + ATP = 2-thiouridine(34) in tRNA + L-cysteinyl-[protein] + A + AMP + diphosphate + H(+). Catalyzes the 2-thiolation of uridine at the wobble position (U34) of tRNA, leading to the formation of s(2)U34. The sequence is that of tRNA-specific 2-thiouridylase MnmA from Xanthomonas oryzae pv. oryzae (strain PXO99A).